A 480-amino-acid chain; its full sequence is Probable E3 ubiquitin protein ligase DRIPH (480 aa).

The RING-type zinc-finger motif lies at 16–57 (CPICTNPFKDATTISECLHTFCRSCIRNKFINERVNACPVCN). Disordered stretches follow at residues 93–133 (GPKT…EPAN), 167–193 (RGRK…PKIK), 241–261 (TPPD…ESVE), and 280–356 (VNQN…EMKV). Residues 103–112 (SSKKKRKSRT) are compositionally biased toward basic residues. A compositionally biased stretch (low complexity) spans 113–133 (SLRVSSSRVSSSPDTPLEPAN). Positions 175 to 193 (KKIDSKPEPELPPKEPKIK) are enriched in basic and acidic residues. The segment covering 246–260 (VEPEISSDDDTEESV) has biased composition (acidic residues). Residues 298-309 (GQKLKTNGAATS) show a composition bias toward polar residues.

It carries out the reaction S-ubiquitinyl-[E2 ubiquitin-conjugating enzyme]-L-cysteine + [acceptor protein]-L-lysine = [E2 ubiquitin-conjugating enzyme]-L-cysteine + N(6)-ubiquitinyl-[acceptor protein]-L-lysine.. The protein operates within protein modification; protein ubiquitination. The chain is Probable E3 ubiquitin protein ligase DRIPH from Arabidopsis thaliana (Mouse-ear cress).